Reading from the N-terminus, the 426-residue chain is Serine hydroxymethyltransferase 1 (426 aa).

(6S)-5,6,7,8-tetrahydrofolate-binding positions include L118 and 122–124; that span reads GHL. The residue at position 227 (K227) is an N6-(pyridoxal phosphate)lysine.

The protein belongs to the SHMT family. In terms of assembly, homodimer. It depends on pyridoxal 5'-phosphate as a cofactor.

It localises to the cytoplasm. It carries out the reaction (6R)-5,10-methylene-5,6,7,8-tetrahydrofolate + glycine + H2O = (6S)-5,6,7,8-tetrahydrofolate + L-serine. The protein operates within one-carbon metabolism; tetrahydrofolate interconversion. It functions in the pathway amino-acid biosynthesis; glycine biosynthesis; glycine from L-serine: step 1/1. Its function is as follows. Catalyzes the reversible interconversion of serine and glycine with tetrahydrofolate (THF) serving as the one-carbon carrier. This reaction serves as the major source of one-carbon groups required for the biosynthesis of purines, thymidylate, methionine, and other important biomolecules. Also exhibits THF-independent aldolase activity toward beta-hydroxyamino acids, producing glycine and aldehydes, via a retro-aldol mechanism. This Mycobacterium bovis (strain ATCC BAA-935 / AF2122/97) protein is Serine hydroxymethyltransferase 1.